A 677-amino-acid chain; its full sequence is Methionine--tRNA ligase (677 aa).

Positions 15 to 25 (PYANGSIHLGH) match the 'HIGH' region motif. Cysteine 146, cysteine 149, cysteine 159, and cysteine 162 together coordinate Zn(2+). Positions 333 to 337 (KMSKS) match the 'KMSKS' region motif. Residue lysine 336 participates in ATP binding. In terms of domain architecture, tRNA-binding spans 575–677 (DFAKIDLRVA…SGAKPGQQVK (103 aa)).

This sequence belongs to the class-I aminoacyl-tRNA synthetase family. MetG type 1 subfamily. Homodimer. Zn(2+) is required as a cofactor.

The protein resides in the cytoplasm. The catalysed reaction is tRNA(Met) + L-methionine + ATP = L-methionyl-tRNA(Met) + AMP + diphosphate. Is required not only for elongation of protein synthesis but also for the initiation of all mRNA translation through initiator tRNA(fMet) aminoacylation. This Cronobacter sakazakii (strain ATCC BAA-894) (Enterobacter sakazakii) protein is Methionine--tRNA ligase.